The chain runs to 302 residues: Arginase (302 aa).

Mn(2+)-binding residues include H103, D126, H128, and D130. Substrate contacts are provided by residues H128–N132, S139–N141, and D180. Positions 229 and 231 each coordinate Mn(2+). Substrate-binding residues include T243 and E274.

It belongs to the arginase family. Requires Mn(2+) as cofactor.

It catalyses the reaction L-arginine + H2O = urea + L-ornithine. It participates in nitrogen metabolism; urea cycle; L-ornithine and urea from L-arginine: step 1/1. The chain is Arginase (arg) from Staphylococcus aureus (strain MRSA252).